The sequence spans 548 residues: Probable malate:quinone oxidoreductase (548 aa).

The disordered stretch occupies residues 521 to 548 (DKPQAADSTPKPQLKPQPVQKEVADIAL). Low complexity predominate over residues 530 to 541 (PKPQLKPQPVQK).

Belongs to the MQO family. It depends on FAD as a cofactor.

The enzyme catalyses (S)-malate + a quinone = a quinol + oxaloacetate. It participates in carbohydrate metabolism; tricarboxylic acid cycle; oxaloacetate from (S)-malate (quinone route): step 1/1. The sequence is that of Probable malate:quinone oxidoreductase from Escherichia coli (strain 55989 / EAEC).